We begin with the raw amino-acid sequence, 453 residues long: Tol-Pal system protein TolB (453 aa).

The first 31 residues, 1-31, serve as a signal peptide directing secretion; the sequence is MINNLSVSMTKVLKIILTIIIILFNTLSILA.

It belongs to the TolB family. The Tol-Pal system is composed of five core proteins: the inner membrane proteins TolA, TolQ and TolR, the periplasmic protein TolB and the outer membrane protein Pal. They form a network linking the inner and outer membranes and the peptidoglycan layer.

It localises to the periplasm. Its function is as follows. Part of the Tol-Pal system, which plays a role in outer membrane invagination during cell division and is important for maintaining outer membrane integrity. The chain is Tol-Pal system protein TolB from Orientia tsutsugamushi (strain Boryong) (Rickettsia tsutsugamushi).